The chain runs to 51 residues: AANQHLCGSHLVEALYLVCGERGFFYSPKAGIVEQCCHNTCSLYQLENYCN.

Disulfide bonds link cysteine 7–cysteine 37, cysteine 19–cysteine 50, and cysteine 36–cysteine 41.

Belongs to the insulin family. As to quaternary structure, heterodimer of a B chain and an A chain linked by two disulfide bonds.

Its subcellular location is the secreted. Insulin decreases blood glucose concentration. It increases cell permeability to monosaccharides, amino acids and fatty acids. It accelerates glycolysis, the pentose phosphate cycle, and glycogen synthesis in liver. The polypeptide is Insulin (INS) (Meleagris gallopavo (Wild turkey)).